A 387-amino-acid chain; its full sequence is Succinate--CoA ligase [ADP-forming] subunit beta (387 aa).

Residues K46, 53–55 (GRG), E99, A102, and E107 contribute to the ATP site. Mg(2+) contacts are provided by N199 and D213. Residues N264 and 321–323 (GIV) contribute to the substrate site.

It belongs to the succinate/malate CoA ligase beta subunit family. As to quaternary structure, heterotetramer of two alpha and two beta subunits. Mg(2+) serves as cofactor.

The catalysed reaction is succinate + ATP + CoA = succinyl-CoA + ADP + phosphate. It catalyses the reaction GTP + succinate + CoA = succinyl-CoA + GDP + phosphate. It functions in the pathway carbohydrate metabolism; tricarboxylic acid cycle; succinate from succinyl-CoA (ligase route): step 1/1. In terms of biological role, succinyl-CoA synthetase functions in the citric acid cycle (TCA), coupling the hydrolysis of succinyl-CoA to the synthesis of either ATP or GTP and thus represents the only step of substrate-level phosphorylation in the TCA. The beta subunit provides nucleotide specificity of the enzyme and binds the substrate succinate, while the binding sites for coenzyme A and phosphate are found in the alpha subunit. This chain is Succinate--CoA ligase [ADP-forming] subunit beta, found in Campylobacter jejuni subsp. jejuni serotype O:23/36 (strain 81-176).